The following is a 692-amino-acid chain: Elongation factor G (692 aa).

Residues 8–282 form the tr-type G domain; that stretch reads ERTRNIGIMA…AIVDYLPAPT (275 aa). Residues 17–24, 81–85, and 135–138 contribute to the GTP site; these read AHIDAGKT, DTPGH, and NKMD.

This sequence belongs to the TRAFAC class translation factor GTPase superfamily. Classic translation factor GTPase family. EF-G/EF-2 subfamily.

The protein localises to the cytoplasm. Its function is as follows. Catalyzes the GTP-dependent ribosomal translocation step during translation elongation. During this step, the ribosome changes from the pre-translocational (PRE) to the post-translocational (POST) state as the newly formed A-site-bound peptidyl-tRNA and P-site-bound deacylated tRNA move to the P and E sites, respectively. Catalyzes the coordinated movement of the two tRNA molecules, the mRNA and conformational changes in the ribosome. The chain is Elongation factor G from Desulforamulus reducens (strain ATCC BAA-1160 / DSM 100696 / MI-1) (Desulfotomaculum reducens).